The following is a 60-amino-acid chain: Large ribosomal subunit protein bL32 (60 aa).

A disordered region spans residues 1 to 60 (MAVQQNKKSRSARDMRRSHDALEASTLSVEKSTGEVHLRHHVSPEGVYRGRKVIDKGADE). A compositionally biased stretch (basic and acidic residues) spans 11–22 (SARDMRRSHDAL).

This sequence belongs to the bacterial ribosomal protein bL32 family.

In Ectopseudomonas mendocina (strain ymp) (Pseudomonas mendocina), this protein is Large ribosomal subunit protein bL32.